The sequence spans 341 residues: Probable sulfurtransferase (341 aa).

Zn(2+) is bound by residues cysteine 40, cysteine 42, cysteine 58, and cysteine 61. Position 88 (glycine 88) interacts with ATP. 2 residues coordinate [4Fe-4S] cluster: cysteine 176 and cysteine 179. Residues arginine 183 and glycine 202 each contribute to the ATP site. Cysteine 267 contacts [4Fe-4S] cluster. Residues cysteine 316, cysteine 319, cysteine 328, and cysteine 331 each coordinate Zn(2+).

Belongs to the TtcA family. [4Fe-4S] cluster serves as cofactor. The cofactor is Mg(2+).

This Methanocaldococcus jannaschii (strain ATCC 43067 / DSM 2661 / JAL-1 / JCM 10045 / NBRC 100440) (Methanococcus jannaschii) protein is Probable sulfurtransferase.